A 199-amino-acid polypeptide reads, in one-letter code: Recombination protein RecR (199 aa).

A C4-type zinc finger spans residues 57-72 (CPICGNITEKEICDIC). The region spanning 80-176 (TTIMVVEQPK…KVTRLAAGLS (97 aa)) is the Toprim domain.

It belongs to the RecR family.

Its function is as follows. May play a role in DNA repair. It seems to be involved in an RecBC-independent recombinational process of DNA repair. It may act with RecF and RecO. The polypeptide is Recombination protein RecR (Lactobacillus acidophilus (strain ATCC 700396 / NCK56 / N2 / NCFM)).